Here is a 273-residue protein sequence, read N- to C-terminus: 4-hydroxy-tetrahydrodipicolinate reductase (273 aa).

Residues 12-17 and glutamate 38 contribute to the NAD(+) site; that span reads GAGGRM. Arginine 39 is an NADP(+) binding site. Residues 102–104 and 126–129 each bind NAD(+); these read GTT and AANF. Histidine 159 serves as the catalytic Proton donor/acceptor. Residue histidine 160 participates in (S)-2,3,4,5-tetrahydrodipicolinate binding. Lysine 163 acts as the Proton donor in catalysis. 169-170 is a (S)-2,3,4,5-tetrahydrodipicolinate binding site; that stretch reads GT.

It belongs to the DapB family. As to quaternary structure, homotetramer.

The protein resides in the cytoplasm. It catalyses the reaction (S)-2,3,4,5-tetrahydrodipicolinate + NAD(+) + H2O = (2S,4S)-4-hydroxy-2,3,4,5-tetrahydrodipicolinate + NADH + H(+). It carries out the reaction (S)-2,3,4,5-tetrahydrodipicolinate + NADP(+) + H2O = (2S,4S)-4-hydroxy-2,3,4,5-tetrahydrodipicolinate + NADPH + H(+). Its pathway is amino-acid biosynthesis; L-lysine biosynthesis via DAP pathway; (S)-tetrahydrodipicolinate from L-aspartate: step 4/4. Its function is as follows. Catalyzes the conversion of 4-hydroxy-tetrahydrodipicolinate (HTPA) to tetrahydrodipicolinate. This Yersinia pestis bv. Antiqua (strain Antiqua) protein is 4-hydroxy-tetrahydrodipicolinate reductase.